Consider the following 396-residue polypeptide: S-adenosylmethionine synthase (396 aa).

H16 is a binding site for ATP. D18 serves as a coordination point for Mg(2+). E44 contributes to the K(+) binding site. Residues E57 and Q100 each contribute to the L-methionine site. Residues 100–110 (QSPDINQGVDR) form a flexible loop region. ATP contacts are provided by residues 165–167 (DAK), D240, 246–247 (RK), A263, and K267. L-methionine is bound at residue D240. K271 provides a ligand contact to L-methionine.

This sequence belongs to the AdoMet synthase family. As to quaternary structure, homotetramer; dimer of dimers. Requires Mg(2+) as cofactor. It depends on K(+) as a cofactor.

It localises to the cytoplasm. It carries out the reaction L-methionine + ATP + H2O = S-adenosyl-L-methionine + phosphate + diphosphate. The protein operates within amino-acid biosynthesis; S-adenosyl-L-methionine biosynthesis; S-adenosyl-L-methionine from L-methionine: step 1/1. Functionally, catalyzes the formation of S-adenosylmethionine (AdoMet) from methionine and ATP. The overall synthetic reaction is composed of two sequential steps, AdoMet formation and the subsequent tripolyphosphate hydrolysis which occurs prior to release of AdoMet from the enzyme. The protein is S-adenosylmethionine synthase of Pseudomonas fluorescens (strain Pf0-1).